We begin with the raw amino-acid sequence, 666 residues long: Secreted protein ARB_01864 (666 aa).

An N-terminal signal peptide occupies residues 1 to 18 (MRFSTLVSLAAWAAAALA). 7 N-linked (GlcNAc...) asparagine glycosylation sites follow: N160, N216, N342, N405, N594, N600, and N662. A disordered region spans residues 323–353 (RGSMKPRGVPNPTRRAIKGNATTSTQPYQHP).

It is found in the secreted. This chain is Secreted protein ARB_01864, found in Arthroderma benhamiae (strain ATCC MYA-4681 / CBS 112371) (Trichophyton mentagrophytes).